The sequence spans 239 residues: Large ribosomal subunit protein uL2 (239 aa).

2 disordered regions span residues 1-20 (MGHR…YRAP) and 202-239 (FGGG…RRKR).

Belongs to the universal ribosomal protein uL2 family. Part of the 50S ribosomal subunit. Forms a bridge to the 30S subunit in the 70S ribosome.

Its function is as follows. One of the primary rRNA binding proteins. Required for association of the 30S and 50S subunits to form the 70S ribosome, for tRNA binding and peptide bond formation. It has been suggested to have peptidyltransferase activity; this is somewhat controversial. Makes several contacts with the 16S rRNA in the 70S ribosome. This Methanosphaerula palustris (strain ATCC BAA-1556 / DSM 19958 / E1-9c) protein is Large ribosomal subunit protein uL2.